A 524-amino-acid polypeptide reads, in one-letter code: Leucine-rich repeat-containing protein 1 (524 aa).

LRR repeat units follow at residues 11-34 (NRHV…IYRY), 35-58 (ARSL…FFQL), 60-81 (KLRK…IANF), 83-105 (QLVE…AFCK), 107-126 (LQVA…SFPE), 127-149 (LQNL…NIGN), 150-172 (LYNL…SLTQ), 173-196 (LRRL…IGAL), 198-218 (HLKD…EIGN), 219-242 (LKNL…ISGL), 244-264 (SLTY…GIGK), 265-288 (LKKL…IGDC), 290-310 (NLTE…SIGK), 311-334 (LKKL…IGGC), 336-356 (SLTM…EVSQ), 357-380 (AVEL…LTTL), and 382-405 (LKAL…IDRA). Positions 456–512 (SAIRFLEDEKDEDENETRTLQRRATPHPGELKNMKKTVENLRNDMNAAKGLDSNKNE) form a coiled coil. The segment at 464–485 (EKDEDENETRTLQRRATPHPGE) is disordered. Thr-480 is modified (phosphothreonine).

Interacts with DLG1. May form a complex with DLG1 and ERBIN, where interaction between LRRC1 and ERBIN is indirect.

Its subcellular location is the cytoplasm. The protein localises to the membrane. The polypeptide is Leucine-rich repeat-containing protein 1 (Lrrc1) (Mus musculus (Mouse)).